Reading from the N-terminus, the 2063-residue chain is Rho guanine nucleotide exchange factor 17 (2063 aa).

Disordered regions lie at residues 22–365 (WSGG…MSDS), 380–466 (YLAS…SNPD), 485–581 (LRVR…AEED), and 602–958 (IQRM…RHVR). Positions 65-76 (PLAAPAQPRPLR) are enriched in low complexity. The span at 87–96 (RRFDAPRLDD) shows a compositional bias: basic and acidic residues. The segment covering 108-122 (PAAAEEAAEGPARGA) has biased composition (low complexity). 2 positions are modified to phosphoserine: serine 142 and serine 152. Residues 225 to 250 (AGARASCSSSSIAASYPVSRSRAASS) are compositionally biased toward low complexity. Serine 310 carries the phosphoserine modification. Positions 313–323 (LNLSSMNSAGV) are enriched in polar residues. 7 positions are modified to phosphoserine: serine 326, serine 332, serine 383, serine 387, serine 395, serine 410, and serine 420. Residues 388 to 397 (RGSSRYSSTE) show a composition bias toward polar residues. A compositionally biased stretch (basic and acidic residues) spans 445-456 (ALRDGGFEPEKS). A phosphoserine mark is found at serine 461 and serine 546. The span at 562–573 (SALKSSSSELLL) shows a compositional bias: low complexity. Serine 619 carries the phosphoserine modification. Over residues 671-680 (LSSSSAQTNH) the composition is skewed to polar residues. The residue at position 696 (serine 696) is a Phosphoserine. Threonine 699 and threonine 702 each carry phosphothreonine. Position 735 is a phosphoserine (serine 735). A compositionally biased stretch (polar residues) spans 754-765 (SVDSNLLGSLSP). The segment covering 827 to 836 (SLSDPSRRGE) has biased composition (basic and acidic residues). Phosphoserine is present on serine 914. Residues 917 to 928 (LIRRGSKKRPAR) are compositionally biased toward basic residues. Residues 930-939 (SHQELRRDEG) show a composition bias toward basic and acidic residues. Phosphoserine is present on residues serine 961 and serine 1002. The segment at 1034-1060 (APPSAEAKPPEAARPADEPTPASKCCS) is disordered. Residues 1041-1050 (KPPEAARPAD) show a composition bias toward basic and acidic residues. The DH domain maps to 1066–1254 (MRKHVAMTLL…KQVAERINKG (189 aa)). Serine 1331 carries the phosphoserine modification. Disordered stretches follow at residues 1564-1584 (HREP…PAGP), 1616-1719 (GLEM…SSHG), 1991-2020 (TPPP…PAPA), and 2036-2055 (FRLS…DDST). Residues 1568-1582 (PPSLRSPPETAPEPA) are compositionally biased toward pro residues. A compositionally biased stretch (low complexity) spans 1644 to 1680 (SPSPSGTLQSQASRSTISSSFGNEETPSSKEATAETT). Positions 2004 to 2013 (PSLEHRDSPW) are enriched in basic and acidic residues.

Highly expressed in the heart.

Functionally, acts as a guanine nucleotide exchange factor (GEF) for RhoA GTPases. The sequence is that of Rho guanine nucleotide exchange factor 17 (ARHGEF17) from Homo sapiens (Human).